A 263-amino-acid chain; its full sequence is Purine nucleoside phosphorylase SAV1187 (263 aa).

His79, Cys124, and His141 together coordinate Zn(2+).

This sequence belongs to the purine nucleoside phosphorylase YfiH/LACC1 family. As to quaternary structure, homodimer. The cofactor is Cu(2+). Requires Zn(2+) as cofactor.

The enzyme catalyses adenosine + phosphate = alpha-D-ribose 1-phosphate + adenine. The catalysed reaction is S-methyl-5'-thioadenosine + phosphate = 5-(methylsulfanyl)-alpha-D-ribose 1-phosphate + adenine. It carries out the reaction inosine + phosphate = alpha-D-ribose 1-phosphate + hypoxanthine. It catalyses the reaction adenosine + H2O + H(+) = inosine + NH4(+). In terms of biological role, purine nucleoside enzyme that catalyzes the phosphorolysis of adenosine and inosine nucleosides, yielding D-ribose 1-phosphate and the respective free bases, adenine and hypoxanthine. Also catalyzes the phosphorolysis of S-methyl-5'-thioadenosine into adenine and S-methyl-5-thio-alpha-D-ribose 1-phosphate. Also has adenosine deaminase activity. The sequence is that of Purine nucleoside phosphorylase SAV1187 from Staphylococcus aureus (strain Mu50 / ATCC 700699).